Consider the following 274-residue polypeptide: Putative homeobox protein Meis3-like 1 (274 aa).

Positions 12–65 (GGDVCSSDSFNEDNTAFAKQVRSERPFFSSNPELDNLMIQAIQVLRFHLLELEK) constitute an MEIS N-terminal domain. 2 disordered regions span residues 108-167 (DSGS…KRGI) and 228-248 (NRTGQGAAFSPEGQPIGGYTE). Residues 123–135 (GLASQSGDNSSDQ) are compositionally biased toward polar residues. A DNA-binding region (homeobox) is located at residues 161–223 (RNKKRGIFPK…NARRRIVQPM (63 aa)).

Belongs to the TALE/MEIS homeobox family.

Its subcellular location is the nucleus. The sequence is that of Putative homeobox protein Meis3-like 1 (MEIS3P1) from Homo sapiens (Human).